Consider the following 163-residue polypeptide: MLTVSLLVCAMMALTQANDDKILKGTATEAGPVSQRAPPNCPAGWQPLGDRCIYYETTAMTWALAETNCMKLGGHLASIHSQEEHSFIQTLNAGVVWIGGSACLQAGAWTWSDGTPMNFRSWCSTKPDDVLAACCMQMTAAADQCWDDLPCPASHKSVCAMTF.

Residues 1 to 17 (MLTVSLLVCAMMALTQA) form the signal peptide. The propeptide occupies 18–34 (NDDKILKGTATEAGPVS). The 125-residue stretch at 39–163 (PNCPAGWQPL…SHKSVCAMTF (125 aa)) folds into the C-type lectin domain. 5 cysteine pairs are disulfide-bonded: Cys41-Cys52, Cys69-Cys159, Cys103-Cys134, Cys123-Cys145, and Cys135-Cys151.

Post-translationally, the N-terminus is blocked.

The protein localises to the secreted. Antifreeze proteins lower the blood freezing point. This chain is Type-2 ice-structuring protein, found in Hemitripterus americanus (Sea raven).